The chain runs to 263 residues: Ribonuclease HII (263 aa).

Positions 39-257 (AFFTGIDEAG…VKPAAAPHAA (219 aa)) constitute an RNase H type-2 domain. Residues Asp-45, Glu-46, and Asp-157 each contribute to the a divalent metal cation site.

The protein belongs to the RNase HII family. The cofactor is Mn(2+). Mg(2+) is required as a cofactor.

The protein localises to the cytoplasm. It catalyses the reaction Endonucleolytic cleavage to 5'-phosphomonoester.. Functionally, endonuclease that specifically degrades the RNA of RNA-DNA hybrids. The chain is Ribonuclease HII from Oleidesulfovibrio alaskensis (strain ATCC BAA-1058 / DSM 17464 / G20) (Desulfovibrio alaskensis).